The following is a 369-amino-acid chain: Short chain dehydrogenase rstn4 (369 aa).

Lys88, Asp111, Asn138, Tyr234, and Lys238 together coordinate NADP(+). Residue Tyr234 is the Proton donor of the active site. The Lowers pKa of active site Tyr role is filled by Lys238.

Belongs to the short-chain dehydrogenases/reductases (SDR) family.

The protein operates within antifungal biosynthesis. In terms of biological role, short chain dehydrogenase; part of the gene cluster that mediates the biosynthesis of the tetrahydropyranyl antifungal agent restricticin that acts as an inhibitor of CYP51 and blocks the ergosterol biosynthesis. The highly reducing polyketide synthase rstn3, the short chain dehydrogenase rstn4, the cyclase rstn5, the FAD-dependent monooxygenase rstn6 and the enoylreductase rstn7 are required to generate the first stable intermediate desmethylrestrictinol. Rstn3 with rstn7 biosynthesize the first polyketide chain intermediate that is reduced by rstn4, followed by epoxidation by rstn6 before 6-endo cyclization via epoxide opening by rstn5 leads to desmethylrestrictinol. The methyltransferase rstn1 then catalyzes the C4 O-methylation of desmethylrestrictinol to produce restrictinol, and the nonribosomal peptide synthetase rstn8 catalyzes the C3 esterification of restrictinol with glycine that leads to restricticin. The polypeptide is Short chain dehydrogenase rstn4 (Aspergillus nomiae NRRL (strain ATCC 15546 / NRRL 13137 / CBS 260.88 / M93)).